The following is a 514-amino-acid chain: Histidine ammonia-lyase (514 aa).

The segment at residues 147-149 is a cross-link (5-imidazolinone (Ala-Gly)); that stretch reads ASG. Position 148 is a 2,3-didehydroalanine (Ser) (Ser148).

Belongs to the PAL/histidase family. Contains an active site 4-methylidene-imidazol-5-one (MIO), which is formed autocatalytically by cyclization and dehydration of residues Ala-Ser-Gly.

It localises to the cytoplasm. It catalyses the reaction L-histidine = trans-urocanate + NH4(+). Its pathway is amino-acid degradation; L-histidine degradation into L-glutamate; N-formimidoyl-L-glutamate from L-histidine: step 1/3. The polypeptide is Histidine ammonia-lyase (Gloeobacter violaceus (strain ATCC 29082 / PCC 7421)).